We begin with the raw amino-acid sequence, 82 residues long: Sec-independent protein translocase protein TatA (82 aa).

The helical transmembrane segment at 1–21 (MGGISIWQLLIIAVIIVLLFG) threads the bilayer. Positions 48–82 (SAKDAKKDADFVPQNLEKKEAETVEKQKQNDKEQA) are disordered.

The protein belongs to the TatA/E family. In terms of assembly, the Tat system comprises two distinct complexes: a TatABC complex, containing multiple copies of TatA, TatB and TatC subunits, and a separate TatA complex, containing only TatA subunits. Substrates initially bind to the TatABC complex, which probably triggers association of the separate TatA complex to form the active translocon.

The protein localises to the cell inner membrane. Its function is as follows. Part of the twin-arginine translocation (Tat) system that transports large folded proteins containing a characteristic twin-arginine motif in their signal peptide across membranes. TatA could form the protein-conducting channel of the Tat system. The protein is Sec-independent protein translocase protein TatA of Aliivibrio salmonicida (strain LFI1238) (Vibrio salmonicida (strain LFI1238)).